A 189-amino-acid polypeptide reads, in one-letter code: MSRLWLSGYRSYELNVFGDQDDKLKVIKFALTNYLTTQIEDGMDWLITGGQLGIEQWTAEVGLTLKKTYPELKVAMMLPYGEFGGRWNENNQAKLQTLLAQVDFHAPVSKQPYENPQQLKNYQEFMVTHTDAATLVYDPDNPGKPTYDYDLIRNFSDTHPYPLTLIDFDWLQESANEYAEKQNNGFNFE.

Belongs to the UPF0398 family.

This is UPF0398 protein lp_1753 from Lactiplantibacillus plantarum (strain ATCC BAA-793 / NCIMB 8826 / WCFS1) (Lactobacillus plantarum).